Reading from the N-terminus, the 533-residue chain is Kelch-like protein 33 (533 aa).

Kelch repeat units lie at residues Ala-210–Ala-258, Glu-273–Gly-322, Lys-323–Gly-369, Leu-371–Gly-418, Arg-419–Gly-465, and Leu-467–Leu-514.

This chain is Kelch-like protein 33 (KLHL33), found in Homo sapiens (Human).